Consider the following 214-residue polypeptide: Endoplasmic reticulum vesicle protein 25 (214 aa).

An N-terminal signal peptide occupies residues 1-20; the sequence is MRSISTLLFIISTFISLVSA. The Lumenal segment spans residues 21-183; sequence LQLAIPATTN…TNESTNSRVK (163 aa). Residues 33–124 form the GOLD domain; sequence PFCIRDFVQE…VREIELDVES (92 aa). A helical membrane pass occupies residues 184-204; sequence WFSILVITSLVGLGAWQVQYL. The Cytoplasmic segment spans residues 205-214; it reads RHYFKVKHII.

This sequence belongs to the EMP24/GP25L family.

The protein resides in the endoplasmic reticulum membrane. It is found in the golgi apparatus membrane. Its function is as follows. Constituent of COPII-coated endoplasmic reticulum-derived transport vesicles. Required for efficient transport of a subset of secretory proteins to the Golgi. Facilitates retrograde transport from the Golgi to the endoplasmic reticulum. The chain is Endoplasmic reticulum vesicle protein 25 (ERV25) from Debaryomyces hansenii (strain ATCC 36239 / CBS 767 / BCRC 21394 / JCM 1990 / NBRC 0083 / IGC 2968) (Yeast).